Reading from the N-terminus, the 187-residue chain is ATP synthase subunit b 2 (187 aa).

A helical transmembrane segment spans residues 32-52; it reads TTFAAQILWLAIAFGLLYYLM.

The protein belongs to the ATPase B chain family. In terms of assembly, F-type ATPases have 2 components, F(1) - the catalytic core - and F(0) - the membrane proton channel. F(1) has five subunits: alpha(3), beta(3), gamma(1), delta(1), epsilon(1). F(0) has three main subunits: a(1), b(2) and c(10-14). The alpha and beta chains form an alternating ring which encloses part of the gamma chain. F(1) is attached to F(0) by a central stalk formed by the gamma and epsilon chains, while a peripheral stalk is formed by the delta and b chains.

Its subcellular location is the cell inner membrane. F(1)F(0) ATP synthase produces ATP from ADP in the presence of a proton or sodium gradient. F-type ATPases consist of two structural domains, F(1) containing the extramembraneous catalytic core and F(0) containing the membrane proton channel, linked together by a central stalk and a peripheral stalk. During catalysis, ATP synthesis in the catalytic domain of F(1) is coupled via a rotary mechanism of the central stalk subunits to proton translocation. Functionally, component of the F(0) channel, it forms part of the peripheral stalk, linking F(1) to F(0). The b'-subunit is a diverged and duplicated form of b found in plants and photosynthetic bacteria. This Methylobacterium sp. (strain 4-46) protein is ATP synthase subunit b 2 (atpF2).